The chain runs to 177 residues: Biotin-dependent acetyl-/propionyl-coenzyme A carboxylase epsilon subunit (177 aa).

The disordered stretch occupies residues 1-112 (MGTCPCESSE…TEKPLHPHEP (112 aa)). Residues 18–100 (VSGTNEVSDG…SDGNETNNPA (83 aa)) show a composition bias toward polar residues.

As to quaternary structure, interacts with the AccA3/AccD5 biotin-dependent acyl-CoA carboxylase complex. Interacts with the AccA3/AccD6 complex. Is also part of the long-chain acyl-CoA carboxylase (LCC) complex, which is composed of AccA3, AccD4, AccD5 and AccE5. The four subunits are essential for activity, but AccD5, together with AccE5, probably plays a structural role rather than a catalytic one.

In terms of biological role, stimulates activity of the AccA3/AccD5 biotin-dependent acyl-CoA carboxylase complex. Interacts with AccD5 and modulates its carboxylase activity for acetyl-CoA and propionyl-CoA. Inhibits activity of the AccA3/AccD6 complex. Is also required for the activity of the long-chain acyl-CoA carboxylase (LCC) complex. This Mycobacterium tuberculosis (strain ATCC 25618 / H37Rv) protein is Biotin-dependent acetyl-/propionyl-coenzyme A carboxylase epsilon subunit.